We begin with the raw amino-acid sequence, 143 residues long: Large-conductance mechanosensitive channel (143 aa).

3 consecutive transmembrane segments (helical) span residues 16–36 (VMDL…TNSL), 40–60 (IIMP…NMFI), and 87–107 (GSFI…FMMV).

This sequence belongs to the MscL family. In terms of assembly, homopentamer.

The protein resides in the cell inner membrane. Its function is as follows. Channel that opens in response to stretch forces in the membrane lipid bilayer. May participate in the regulation of osmotic pressure changes within the cell. The sequence is that of Large-conductance mechanosensitive channel from Psychrobacter sp. (strain PRwf-1).